Reading from the N-terminus, the 396-residue chain is CCA-adding enzyme (396 aa).

2 residues coordinate ATP: Gly-27 and Arg-30. CTP contacts are provided by Gly-27 and Arg-30. The Mg(2+) site is built by Asp-40 and Asp-42. Residues Arg-111, Asp-154, Arg-157, Arg-160, and Arg-163 each coordinate ATP. Arg-111, Asp-154, Arg-157, Arg-160, and Arg-163 together coordinate CTP.

This sequence belongs to the tRNA nucleotidyltransferase/poly(A) polymerase family. Bacterial CCA-adding enzyme type 3 subfamily. As to quaternary structure, homodimer. Mg(2+) serves as cofactor.

The enzyme catalyses a tRNA precursor + 2 CTP + ATP = a tRNA with a 3' CCA end + 3 diphosphate. It catalyses the reaction a tRNA with a 3' CCA end + 2 CTP + ATP = a tRNA with a 3' CCACCA end + 3 diphosphate. Catalyzes the addition and repair of the essential 3'-terminal CCA sequence in tRNAs without using a nucleic acid template. Adds these three nucleotides in the order of C, C, and A to the tRNA nucleotide-73, using CTP and ATP as substrates and producing inorganic pyrophosphate. tRNA 3'-terminal CCA addition is required both for tRNA processing and repair. Also involved in tRNA surveillance by mediating tandem CCA addition to generate a CCACCA at the 3' terminus of unstable tRNAs. While stable tRNAs receive only 3'-terminal CCA, unstable tRNAs are marked with CCACCA and rapidly degraded. This is CCA-adding enzyme from Pediococcus pentosaceus (strain ATCC 25745 / CCUG 21536 / LMG 10740 / 183-1w).